Reading from the N-terminus, the 337-residue chain is D-alanine--D-alanine ligase (337 aa).

An ATP-grasp domain is found at 124–330; the sequence is KMWFSALGIP…FTEYLSLVIN (207 aa). 154 to 209 provides a ligand contact to ATP; sequence ALANWGSIFIKAASQGSSVGCYKVDDSSKVAQVLKDAFGYAPYVVVEKTIKARELE. The Mg(2+) site is built by Asp284, Glu297, and Asn299.

The protein belongs to the D-alanine--D-alanine ligase family. Requires Mg(2+) as cofactor. It depends on Mn(2+) as a cofactor.

It localises to the cytoplasm. It carries out the reaction 2 D-alanine + ATP = D-alanyl-D-alanine + ADP + phosphate + H(+). Its pathway is cell wall biogenesis; peptidoglycan biosynthesis. Functionally, cell wall formation. The polypeptide is D-alanine--D-alanine ligase (Shewanella putrefaciens (strain CN-32 / ATCC BAA-453)).